A 49-amino-acid polypeptide reads, in one-letter code: MRPMSRRSLDWTYSLLLLAIVLLSWGFVIYASTVAARRQLQKEFPDKFF.

The helical transmembrane segment at 11 to 31 (WTYSLLLLAIVLLSWGFVIYA) threads the bilayer.

It is found in the membrane. The chain is Small integral membrane protein 27 from Mus musculus (Mouse).